A 293-amino-acid polypeptide reads, in one-letter code: Foldase protein PrsA 2 (293 aa).

The first 20 residues, 1-20 (MKKKLILGLVMMMALFSLAA), serve as a signal peptide directing secretion. Cys21 carries N-palmitoyl cysteine lipidation. Cys21 carries the S-diacylglycerol cysteine lipid modification. Residues 135–226 (QPDITVSHIL…YGYHIIQMDK (92 aa)) form the PpiC domain.

The protein belongs to the PrsA family.

It is found in the cell membrane. The catalysed reaction is [protein]-peptidylproline (omega=180) = [protein]-peptidylproline (omega=0). Functionally, plays a major role in protein secretion by helping the post-translocational extracellular folding of several secreted proteins. This Listeria monocytogenes serovar 1/2a (strain ATCC BAA-679 / EGD-e) protein is Foldase protein PrsA 2 (prsA2).